The chain runs to 484 residues: Gasdermin-D (484 aa).

Residue tyrosine 37 is modified to Phosphotyrosine. The residue at position 56 (cysteine 56) is an S-(2-succinyl)cysteine. Transmembrane regions (beta stranded) follow at residues 91–97 (QGSVELA) and 103–108 (KIAGGA). Phosphotyrosine is present on tyrosine 158. Beta stranded transmembrane passes span 180–186 (GSGRFSL) and 191–197 (CLQGEGQ). Serine 185 carries the phosphoserine modification. S-(2-succinyl)cysteine is present on residues cysteine 191 and cysteine 268. Residue cysteine 191 is the site of S-palmitoyl cysteine attachment. A linker helix loop region spans residues 277 to 296 (VPAEGAFTEDFQGLRAEVET). At cysteine 309 the chain carries S-(2-succinyl)cysteine. O-linked (GlcNAc) serine glycosylation occurs at serine 338. An S-(2-succinyl)cysteine modification is found at cysteine 467.

This sequence belongs to the gasdermin family. In terms of assembly, homooligomer; homooligomeric ring-shaped pore complex containing 27-28 subunits when inserted in the membrane. Homooligomerization is promoted by the mTORC1 complex in macrophages. In response to a canonical inflammasome stimulus, such as nigericin, recruited to NLRP3 inflammasone with similar kinetics to that of uncleaved CASP1 precursor. Although this recruitment is also observed in the absence of PYCARD, it is more efficient in its presence. Post-translationally, cleavage at Asp-275 by CASP1 (mature and uncleaved precursor forms), CASP4, CASP5 or CASP8 relieves autoinhibition and is sufficient to initiate pyroptosis. Cleavage by CASP1 and CASP4 is not strictly dependent on the consensus cleavage site on GSDMD but depends on an exosite interface on CASP1 that recognizes and binds the Gasdermin-D, C-terminal (GSDMD-CT) part. Cleavage by CASP8 takes place following inactivation of MAP3K7/TAK1 by Yersinia toxin YopJ. Cleavage at Asp-87 by CASP3 or CASP7 inactivates the ability to mediate pyroptosis, but generates the Gasdermin-D, p13 chain, which translocates to the nucleus and acts as a transcription regulator. Cleavage by papain allergen generates the Gasdermin-D, p40 chain. In terms of processing, palmitoylated at Cys-191 by ZDHHC5 and ZDHHC9 in response to microbial infection and danger signals. Palmitoylation takes place before cleavage by caspases (CASP1, CASP4, CASP5 or CASP8) and is required for membrane translocation and pore formation. Depalmitoylated by LYPLA2. Succination of Cys-191 by the Krebs cycle intermediate fumarate, which leads to S-(2-succinyl)cysteine residues, inhibits processing by caspases, and ability to initiate pyroptosis. Succination modification is catalyzed by a non-enzymatic reaction caused by an accumulation of fumarate. Post-translationally, glycosylated: O-GlcNAcylation by OGT leads to reduced cleavage by CASP4 and decreased LPS-induced endothelial cell pyroptosis. In terms of processing, (Microbial infection) Cleaved and inactivated by Protease 3C from Human enterovirus 71 (EV71), preventing GSDMD-mediated pyroptosis. (Microbial infection) Cleaved and inactivated by the 3C-like proteinase nsp5 from human coronavirus SARS-CoV-2, preventing GSDMD-mediated pyroptosis. Post-translationally, (Microbial infection) Ubiquitinated by S.flexneri IpaH7.8, leading to its degradation by the proteasome. As to expression, expressed in the suprabasal cells of esophagus, as well as in the isthmus/neck, pit, and gland of the stomach, suggesting preferential expression in differentiating cells.

The protein localises to the cytoplasm. It localises to the cytosol. It is found in the inflammasome. The protein resides in the cell membrane. Its subcellular location is the secreted. The protein localises to the mitochondrion membrane. It localises to the nucleus. The full-length protein before cleavage is inactive: intramolecular interactions between N- and C-terminal domains mediate autoinhibition in the absence of activation signal. The intrinsic pyroptosis-inducing activity is carried by the released N-terminal moiety (Gasdermin-D, N-terminal) following cleavage by caspases CASP1, CASP4, CASP5 or CASP8. Cleavage at Asp-87 by CASP3 or CASP7 inactivates the ability to mediate pyroptosis. Homooligomerization and pore formation is specifically inhibited by VHH(GSDMD-1) and, to a lesser extent, VHH(GSDMD-2) nanobodies, protecting against excessive pyroptosis. Inhibited by small molecule NU6300, which covalently reacts with Cys-191, thereby preventing palmitoylation and pyroptosis. In terms of biological role, precursor of a pore-forming protein that plays a key role in host defense against pathogen infection and danger signals. This form constitutes the precursor of the pore-forming protein: upon cleavage, the released N-terminal moiety (Gasdermin-D, N-terminal) binds to membranes and forms pores, triggering pyroptosis. Promotes pyroptosis in response to microbial infection and danger signals. Produced by the cleavage of gasdermin-D by inflammatory caspases CASP1, CASP4 or CASP5 in response to canonical, as well as non-canonical (such as cytosolic LPS) inflammasome activators. After cleavage, moves to the plasma membrane where it strongly binds to inner leaflet lipids, including monophosphorylated phosphatidylinositols, such as phosphatidylinositol 4-phosphate, bisphosphorylated phosphatidylinositols, such as phosphatidylinositol (4,5)-bisphosphate, as well as phosphatidylinositol (3,4,5)-bisphosphate, and more weakly to phosphatidic acid and phosphatidylserine. Homooligomerizes within the membrane and forms pores of 10-15 nanometers (nm) of inner diameter, allowing the release of mature interleukin-1 (IL1B and IL18) and triggering pyroptosis. Gasdermin pores also allow the release of mature caspase-7 (CASP7). In some, but not all, cells types, pyroptosis is followed by pyroptotic cell death, which is caused by downstream activation of ninjurin-1 (NINJ1), which mediates membrane rupture (cytolysis). Also forms pores in the mitochondrial membrane, resulting in release of mitochondrial DNA (mtDNA) into the cytosol. Gasdermin-D, N-terminal released from pyroptotic cells into the extracellular milieu rapidly binds to and kills both Gram-negative and Gram-positive bacteria, without harming neighboring mammalian cells, as it does not disrupt the plasma membrane from the outside due to lipid-binding specificity. Under cell culture conditions, also active against intracellular bacteria, such as Listeria monocytogenes. Also active in response to MAP3K7/TAK1 inactivation by Yersinia toxin YopJ, which triggers cleavage by CASP8 and subsequent activation. Required for mucosal tissue defense against enteric pathogens. Activation of the non-canonical inflammasome in brain endothelial cells can lead to excessive pyroptosis, leading to blood-brain barrier breakdown. Strongly binds to bacterial and mitochondrial lipids, including cardiolipin. Does not bind to unphosphorylated phosphatidylinositol, phosphatidylethanolamine nor phosphatidylcholine. Functionally, transcription coactivator produced by the cleavage by CASP3 or CASP7 in the upper small intestine in response to dietary antigens. Required to maintain food tolerance in small intestine: translocates to the nucleus and acts as a coactivator for STAT1 to induce the transcription of CIITA and MHC class II molecules, which in turn induce type 1 regulatory T (Tr1) cells in upper small intestine. Its function is as follows. Produced by the cleavage by papain allergen. After cleavage, moves to the plasma membrane and homooligomerizes within the membrane and forms pores of 10-15 nanometers (nm) of inner diameter, allowing the specific release of mature interleukin-33 (IL33), promoting type 2 inflammatory immune response. This is Gasdermin-D from Homo sapiens (Human).